The sequence spans 856 residues: Structure-specific endonuclease subunit SLX4 (856 aa).

Residues Met1 to Ser19 show a composition bias toward polar residues. Disordered stretches follow at residues Met1–Val24, Val38–Ile65, Val88–Ala121, Lys139–Leu202, Gly296–Gln326, Lys362–Pro392, Ser621–Asp640, Arg668–Pro689, and Asp715–Asp742. The segment covering Ser51–Ser60 has biased composition (low complexity). Residues Lys139 to Arg152 show a composition bias toward basic residues. A compositionally biased stretch (polar residues) spans Gly296–Asp309. Residues Ser673–Asn686 are compositionally biased toward polar residues.

The protein belongs to the SLX4 family. As to quaternary structure, forms a heterodimer with SLX1. Post-translationally, phosphorylated in response to DNA damage.

The protein localises to the nucleus. Its function is as follows. Regulatory subunit of the SLX1-SLX4 structure-specific endonuclease that resolves DNA secondary structures generated during DNA repair and recombination. Has endonuclease activity towards branched DNA substrates, introducing single-strand cuts in duplex DNA close to junctions with ss-DNA. This chain is Structure-specific endonuclease subunit SLX4, found in Blastomyces gilchristii (strain SLH14081) (Blastomyces dermatitidis).